Reading from the N-terminus, the 72-residue chain is Omega-conotoxin-like S6.6 (72 aa).

Positions 1-22 (MKLTCVVIVAVLLLTACQLLTA) are cleaved as a signal peptide. A propeptide spanning residues 23–45 (DDSRGTQKHRALRSDTKLSMSTR) is cleaved from the precursor. Intrachain disulfides connect cysteine 46-cysteine 61, cysteine 53-cysteine 65, and cysteine 60-cysteine 71. Residue cysteine 71 is modified to Cysteine amide.

Belongs to the conotoxin O1 superfamily. In terms of tissue distribution, expressed by the venom duct.

The protein localises to the secreted. Functionally, omega-conotoxins act at presynaptic membranes, they bind and block voltage-gated calcium channels (Cav). This toxin blocks N-, P- and Q-type calcium channels. This chain is Omega-conotoxin-like S6.6, found in Conus striatus (Striated cone).